Reading from the N-terminus, the 106-residue chain is COX assembly mitochondrial protein homolog (106 aa).

The residue at position 2 (Ala-2) is an N-acetylalanine. One can recognise a CHCH domain in the interval 28–71; it reads KERCSEQVQDFTKCCKNSGVLMVVKCRKENSALKECLTAYYNDP. Short sequence motifs (cx9C motif) lie at residues 31–41 and 53–63; these read CSEQVQDFTKC and CRKENSALKEC. Disulfide bonds link Cys-31–Cys-63 and Cys-41–Cys-53.

It belongs to the CMC family. As to quaternary structure, component of the MITRAC (mitochondrial translation regulation assembly intermediate of cytochrome c oxidase complex) complex, the core components of this complex being COA3/MITRAC12 and COX14.

Its subcellular location is the mitochondrion. Functionally, component of the MITRAC (mitochondrial translation regulation assembly intermediate of cytochrome c oxidase complex) complex, that regulates cytochrome c oxidase assembly. This Homo sapiens (Human) protein is COX assembly mitochondrial protein homolog (CMC1).